The chain runs to 163 residues: Cytochrome b6-f complex subunit 4 (163 aa).

Transmembrane regions (helical) follow at residues 36-56 (LLYIFPVVILGTIACNVGLAV), 95-115 (LLGVLLMVSVPLGLLTVPFLE), and 131-151 (TVFLIGTAVALWLGIGATLPI).

It belongs to the cytochrome b family. PetD subfamily. The 4 large subunits of the cytochrome b6-f complex are cytochrome b6, subunit IV (17 kDa polypeptide, petD), cytochrome f and the Rieske protein, while the 4 small subunits are petG, petL, petM and petN. The complex functions as a dimer.

The protein localises to the plastid. Its subcellular location is the chloroplast thylakoid membrane. Functionally, component of the cytochrome b6-f complex, which mediates electron transfer between photosystem II (PSII) and photosystem I (PSI), cyclic electron flow around PSI, and state transitions. The sequence is that of Cytochrome b6-f complex subunit 4 from Phalaenopsis aphrodite subsp. formosana (Moth orchid).